A 71-amino-acid chain; its full sequence is Disintegrin applaggin (71 aa).

The Disintegrin domain maps to 1–71 (EAGEECDCGS…SAGCPRNPFH (71 aa)). 6 disulfides stabilise this stretch: Cys6/Cys21, Cys8/Cys16, Cys15/Cys38, Cys29/Cys35, Cys34/Cys58, and Cys47/Cys65. Residues 50–52 (RGD) carry the Cell attachment site motif.

The protein belongs to the venom metalloproteinase (M12B) family. P-II subfamily. P-IIa sub-subfamily. As to quaternary structure, monomer (disintegrin). In terms of tissue distribution, expressed by the venom gland.

Its subcellular location is the secreted. Inhibits fibrinogen interaction with platelets. Acts by binding to alpha-IIb/beta-3 (ITGA2B/ITGB3) on the platelet surface and inhibits aggregation induced by ADP, thrombin, platelet-activating factor and collagen. The chain is Disintegrin applaggin from Agkistrodon piscivorus piscivorus (Eastern cottonmouth).